Consider the following 151-residue polypeptide: Small ribosomal subunit protein uS19 (151 aa).

A2 bears the N-acetylalanine mark.

Belongs to the universal ribosomal protein uS19 family.

In terms of biological role, negatively regulates lifespan. The sequence is that of Small ribosomal subunit protein uS19 from Caenorhabditis elegans.